The chain runs to 270 residues: Decarboxylase NovR (270 aa).

This sequence belongs to the aldolase class II family.

It participates in antibiotic biosynthesis; novobiocin biosynthesis. May mediate the 2 consecutive oxidative decarboxylation steps in the biosynthesis of the prenylated hydroxybenzoic acid moiety of novobiocin, an aminocoumarin family antibiotic that targets bacterial DNA gyrases. In Streptomyces niveus (Streptomyces spheroides), this protein is Decarboxylase NovR (novR).